A 462-amino-acid chain; its full sequence is NAD-capped RNA hydrolase NUDT12 (462 aa).

ANK repeat units follow at residues 11–40 (EIVTQFHCSAAEGDIAKLTGILSHSPSLLN), 45–74 (NGWTALMYAARNGHPEIVQFLLEKGCDRSI), and 78–98 (SRQTALDIAVFWGYKHIANLL). Lys-185 bears the N6-succinyllysine mark. Zn(2+)-binding residues include Cys-284 and Cys-287. The residue at position 292 (Lys-292) is an N6-succinyllysine. Zn(2+)-binding residues include Cys-302 and Cys-307. Residues Tyr-318, 354-356 (AGF), Glu-370, Glu-374, and Glu-415 contribute to the substrate site. A Nudix hydrolase domain is found at 319–453 (PRVDPVVIMQ…SRAIAHQLIK (135 aa)). Mg(2+) contacts are provided by Ala-354, Glu-370, Glu-374, and Glu-415. Residues 355 to 376 (GFIEPGETIEDAVRREVEEESG) carry the Nudix box motif. A Microbody targeting signal motif is present at residues 460-462 (PNL).

The protein belongs to the Nudix hydrolase family. NudC subfamily. In terms of assembly, homodimer. Homodimerization is essential for its catalytic activity and protein stability. Interacts (via ANK repeats) with BLMH. It depends on Mg(2+) as a cofactor. Zn(2+) is required as a cofactor.

Its subcellular location is the cytoplasm. It localises to the peroxisome. The protein localises to the cytoplasmic granule. The enzyme catalyses a 5'-end NAD(+)-phospho-ribonucleoside in mRNA + H2O = a 5'-end phospho-adenosine-phospho-ribonucleoside in mRNA + beta-nicotinamide D-ribonucleotide + 2 H(+). It catalyses the reaction NAD(+) + H2O = beta-nicotinamide D-ribonucleotide + AMP + 2 H(+). The catalysed reaction is NADH + H2O = reduced beta-nicotinamide D-ribonucleotide + AMP + 2 H(+). It carries out the reaction NADPH + H2O = reduced beta-nicotinamide D-ribonucleotide + adenosine 2',5'-bisphosphate + 2 H(+). Functionally, mRNA decapping enzyme that specifically removes the nicotinamide adenine dinucleotide (NAD) cap from a subset of mRNAs by hydrolyzing the diphosphate linkage to produce nicotinamide mononucleotide (NMN) and 5' monophosphate mRNA. The NAD-cap is present at the 5'-end of some RNAs; in contrast to the canonical N7 methylguanosine (m7G) cap, the NAD cap promotes mRNA decay. Preferentially acts on NAD-capped transcripts in response to nutrient stress. Also acts on free nicotinamide adenine dinucleotide molecules: hydrolyzes NAD(H) into NMN(H) and AMP, and NADPH into NMNH and 2',5'-ADP. May act to regulate the concentration of peroxisomal nicotinamide nucleotide cofactors required for oxidative metabolism in this organelle. Regulates the levels of circadian clock components PER1, PER2, PER3 and CRY2 in the liver. The protein is NAD-capped RNA hydrolase NUDT12 of Homo sapiens (Human).